The sequence spans 98 residues: Leydig cell tumor 10 kDa protein homolog (98 aa).

Disordered stretches follow at residues 1 to 38 and 73 to 98; these read MAQG…RVIA and SLPK…KMPA. Residues 16–25 show a composition bias toward low complexity; sequence SKAAAAAASA. Basic residues predominate over residues 28–38; the sequence is RGPRKGGRVIA. Over residues 73-83 the composition is skewed to low complexity; the sequence is SLPKKLALLKA.

It belongs to the UPF0390 family.

Functionally, may have a potential role in hypercalcemia of malignancy. The sequence is that of Leydig cell tumor 10 kDa protein homolog from Bos taurus (Bovine).